The following is a 434-amino-acid chain: ATP-dependent protease ATPase subunit HslU (434 aa).

Residues Val18, 60-65 (GVGKTE), Asp247, Glu312, and Arg384 each bind ATP.

It belongs to the ClpX chaperone family. HslU subfamily. A double ring-shaped homohexamer of HslV is capped on each side by a ring-shaped HslU homohexamer. The assembly of the HslU/HslV complex is dependent on binding of ATP.

The protein resides in the cytoplasm. Its function is as follows. ATPase subunit of a proteasome-like degradation complex; this subunit has chaperone activity. The binding of ATP and its subsequent hydrolysis by HslU are essential for unfolding of protein substrates subsequently hydrolyzed by HslV. HslU recognizes the N-terminal part of its protein substrates and unfolds these before they are guided to HslV for hydrolysis. The chain is ATP-dependent protease ATPase subunit HslU from Bradyrhizobium sp. (strain ORS 278).